The chain runs to 293 residues: Ribonuclease P/MRP protein subunit RPP1 (293 aa).

Belongs to the eukaryotic/archaeal RNase P protein component 3 family. As to quaternary structure, component of nuclear RNase P and RNase MRP complexes. RNase P consists of an RNA moiety and at least 9 protein subunits including POP1, POP3, POP4, POP5, POP6, POP7, POP8, RPP1 and RPR2. RNase MRP complex consists of an RNA moiety and at least 10 protein subunits including POP1, POP3, POP4, POP5, POP6, POP7, POP8, RMP1, RPP1 and SNM1, many of which are shared with the RNase P complex.

Its subcellular location is the nucleus. It catalyses the reaction Endonucleolytic cleavage of RNA, removing 5'-extranucleotides from tRNA precursor.. In terms of biological role, component of ribonuclease P, a protein complex that generates mature tRNA molecules by cleaving their 5'-ends. Also a component of RNase MRP, which cleaves pre-rRNA sequences. In Saccharomyces cerevisiae (strain ATCC 204508 / S288c) (Baker's yeast), this protein is Ribonuclease P/MRP protein subunit RPP1 (RPP1).